Here is a 60-residue protein sequence, read N- to C-terminus: Sec-independent protein translocase protein TatA (60 aa).

A helical membrane pass occupies residues Met-1–Phe-21.

Belongs to the TatA/E family. As to quaternary structure, forms a complex with TatC.

Its subcellular location is the cell membrane. Its function is as follows. Part of the twin-arginine translocation (Tat) system that transports large folded proteins containing a characteristic twin-arginine motif in their signal peptide across membranes. TatA could form the protein-conducting channel of the Tat system. In Anoxybacillus flavithermus (strain DSM 21510 / WK1), this protein is Sec-independent protein translocase protein TatA.